The following is a 495-amino-acid chain: Cobyric acid synthase (495 aa).

Positions 249 to 443 constitute a GATase cobBQ-type domain; sequence EININVIRLP…LHGLFDNGAW (195 aa). Catalysis depends on C330, which acts as the Nucleophile. Residue H435 is part of the active site.

It belongs to the CobB/CobQ family. CobQ subfamily.

It participates in cofactor biosynthesis; adenosylcobalamin biosynthesis. Its function is as follows. Catalyzes amidations at positions B, D, E, and G on adenosylcobyrinic A,C-diamide. NH(2) groups are provided by glutamine, and one molecule of ATP is hydrogenolyzed for each amidation. The polypeptide is Cobyric acid synthase (Gloeothece citriformis (strain PCC 7424) (Cyanothece sp. (strain PCC 7424))).